Reading from the N-terminus, the 140-residue chain is Ribosome-binding factor A (140 aa).

Residues 1–23 form a disordered region; the sequence is MLRDRNRSGVRGGAEGPSQRQRR.

It belongs to the RbfA family. Monomer. Binds 30S ribosomal subunits, but not 50S ribosomal subunits or 70S ribosomes.

The protein resides in the cytoplasm. Functionally, one of several proteins that assist in the late maturation steps of the functional core of the 30S ribosomal subunit. Associates with free 30S ribosomal subunits (but not with 30S subunits that are part of 70S ribosomes or polysomes). Required for efficient processing of 16S rRNA. May interact with the 5'-terminal helix region of 16S rRNA. The chain is Ribosome-binding factor A from Acidiphilium cryptum (strain JF-5).